A 101-amino-acid polypeptide reads, in one-letter code: MISLGHLLALGAVLFCISLAGIFLNRKNVIVLLMSIELMLLAVNVNFIAFSRQLGDTAGQLFVFFILTVAAAEAAIGLAILVTLFRTHHTINVAEVDALKG.

3 helical membrane passes run 4-24, 30-50, and 62-82; these read LGHL…GIFL, IVLL…FIAF, and FVFF…AILV.

The protein belongs to the complex I subunit 4L family. NDH-1 is composed of 14 different subunits. Subunits NuoA, H, J, K, L, M, N constitute the membrane sector of the complex.

Its subcellular location is the cell inner membrane. The enzyme catalyses a quinone + NADH + 5 H(+)(in) = a quinol + NAD(+) + 4 H(+)(out). Its function is as follows. NDH-1 shuttles electrons from NADH, via FMN and iron-sulfur (Fe-S) centers, to quinones in the respiratory chain. The immediate electron acceptor for the enzyme in this species is believed to be ubiquinone. Couples the redox reaction to proton translocation (for every two electrons transferred, four hydrogen ions are translocated across the cytoplasmic membrane), and thus conserves the redox energy in a proton gradient. The chain is NADH-quinone oxidoreductase subunit K from Xylella fastidiosa (strain Temecula1 / ATCC 700964).